The sequence spans 377 residues: Chaperone protein DnaJ (377 aa).

The J domain occupies 5–70; that stretch reads DFYETLGVSK…QKRAAYDRFG (66 aa). Residues 138–216 form a CR-type zinc finger; it reads GKTAQIRVPT…CHGQGRVTEE (79 aa). Zn(2+) is bound by residues cysteine 151, cysteine 154, cysteine 168, cysteine 171, cysteine 190, cysteine 193, cysteine 204, and cysteine 207. CXXCXGXG motif repeat units lie at residues 151–158, 168–175, 190–197, and 204–211; these read CDVCSGSG, CATCQGSG, CPTCHGRG, and CGKCHGQG.

This sequence belongs to the DnaJ family. In terms of assembly, homodimer. Zn(2+) serves as cofactor.

Its subcellular location is the cytoplasm. Participates actively in the response to hyperosmotic and heat shock by preventing the aggregation of stress-denatured proteins and by disaggregating proteins, also in an autonomous, DnaK-independent fashion. Unfolded proteins bind initially to DnaJ; upon interaction with the DnaJ-bound protein, DnaK hydrolyzes its bound ATP, resulting in the formation of a stable complex. GrpE releases ADP from DnaK; ATP binding to DnaK triggers the release of the substrate protein, thus completing the reaction cycle. Several rounds of ATP-dependent interactions between DnaJ, DnaK and GrpE are required for fully efficient folding. Also involved, together with DnaK and GrpE, in the DNA replication of plasmids through activation of initiation proteins. This Agrobacterium fabrum (strain C58 / ATCC 33970) (Agrobacterium tumefaciens (strain C58)) protein is Chaperone protein DnaJ.